The sequence spans 169 residues: Secreted LysM effector Blys5 (169 aa).

Residues 1–19 form the signal peptide; sequence MKLSVISAVFVSLAAAAAA. 2 LysM domains span residues 47 to 94 and 121 to 167; these read TYYQ…YYCV and QWYK…NVCV.

This sequence belongs to the secreted LysM effector family.

Its function is as follows. Secreted effector that enables the plant pathogenic fungus to manipulate host defenses for successful infection. Required for the full virulence to infect insect hosts. Protects fungal hyphae against the hydrolytic activity of chitinase and plays an important role in evasion of insect immunities. Binds chitin and can additionally bind chitosan and cellulose. Coats and protects the cell walls of insect pathogens from host cell recognition and additionally shields fungal cells from the hydrolysis of insect chitinases. In Beauveria bassiana (strain ARSEF 2860) (White muscardine disease fungus), this protein is Secreted LysM effector Blys5.